A 232-amino-acid chain; its full sequence is Pyridoxine 5'-phosphate synthase (232 aa).

N7 is a binding site for 3-amino-2-oxopropyl phosphate. 9–10 (DH) provides a ligand contact to 1-deoxy-D-xylulose 5-phosphate. R18 is a binding site for 3-amino-2-oxopropyl phosphate. The active-site Proton acceptor is the H43. The 1-deoxy-D-xylulose 5-phosphate site is built by R45 and H50. The active-site Proton acceptor is the E69. T99 provides a ligand contact to 1-deoxy-D-xylulose 5-phosphate. The Proton donor role is filled by H185. Residues G186 and 207–208 (GH) contribute to the 3-amino-2-oxopropyl phosphate site.

It belongs to the PNP synthase family. As to quaternary structure, homooctamer; tetramer of dimers.

Its subcellular location is the cytoplasm. It catalyses the reaction 3-amino-2-oxopropyl phosphate + 1-deoxy-D-xylulose 5-phosphate = pyridoxine 5'-phosphate + phosphate + 2 H2O + H(+). The protein operates within cofactor biosynthesis; pyridoxine 5'-phosphate biosynthesis; pyridoxine 5'-phosphate from D-erythrose 4-phosphate: step 5/5. In terms of biological role, catalyzes the complicated ring closure reaction between the two acyclic compounds 1-deoxy-D-xylulose-5-phosphate (DXP) and 3-amino-2-oxopropyl phosphate (1-amino-acetone-3-phosphate or AAP) to form pyridoxine 5'-phosphate (PNP) and inorganic phosphate. The protein is Pyridoxine 5'-phosphate synthase of Gluconobacter oxydans (strain 621H) (Gluconobacter suboxydans).